Here is a 113-residue protein sequence, read N- to C-terminus: Beta-microseminoprotein (113 aa).

The signal sequence occupies residues 1 to 20 (MEAWLGSLLFLATMVIASKA). Intrachain disulfides connect C22–C69, C38–C61, C56–C92, C59–C68, and C83–C106.

This sequence belongs to the beta-microseminoprotein family. As to quaternary structure, homodimer; Interacts with PI16.

The protein resides in the secreted. This Mus musculus (Mouse) protein is Beta-microseminoprotein (Msmb).